A 26-amino-acid polypeptide reads, in one-letter code: Citropin-2.1.3 (26 aa).

In terms of tissue distribution, expressed by the dorsal and submental skin glands.

Its subcellular location is the secreted. In Ranoidea citropa (Australian Blue Mountains tree frog), this protein is Citropin-2.1.3.